Consider the following 103-residue polypeptide: Small ribosomal subunit protein uS10 (103 aa).

Belongs to the universal ribosomal protein uS10 family. In terms of assembly, part of the 30S ribosomal subunit.

Its function is as follows. Involved in the binding of tRNA to the ribosomes. The polypeptide is Small ribosomal subunit protein uS10 (Laribacter hongkongensis (strain HLHK9)).